A 65-amino-acid polypeptide reads, in one-letter code: Large ribosomal subunit protein bL35 (65 aa).

Composition is skewed to basic residues over residues 1–15 (MPKM…KRFT) and 26–44 (QAFK…KRQL). The disordered stretch occupies residues 1–65 (MPKMKTKKSA…KSVRAMMPYA (65 aa)).

This sequence belongs to the bacterial ribosomal protein bL35 family.

The chain is Large ribosomal subunit protein bL35 from Ralstonia nicotianae (strain ATCC BAA-1114 / GMI1000) (Ralstonia solanacearum).